Here is a 674-residue protein sequence, read N- to C-terminus: MQSREDAPRSRRLASPRGGKRPKKIHKPTVSAFFTGPEELKDTAHSAALLAQLKSFYDARLLCDVTIEVVTPGSGPGTGRLFPCNRNVLAAACPYFKSMFTGGMYESQQASVTMHDVDAESFEVLVDYCYTGRVSLSEANVERLYAASDMLQLEYVREACASFLARRLDLTNCTAILKFADAFGHRKLRSQAQSYIAQNFKQLSHMGSIREETLADLTLAQLLAVLRLDSLDVESEQTVCHVAVQWLEAAPKERGPSAAEVFKCVRWMHFTEEDQDYLEGLLTKPIVKKYCLDVIEGALQMRYGDLLYKSLVPVPNSSSSSSSSNSLVSAAENPPQRLGMCAKEMVIFFGHPRDPFLCCDPYSGDLYKVPSPLTCLAHTRTVTTLAVCISPDHDIYLAAQPRTDLWVYKPAQNSWQQLADRLLCREGMDVAYLNGYIYILGGRDPITGVKLKEVECYNVKRNQWALVAPLPHSFLSFDLMVIRDYLYALNSKRMFCYDPSHNMWLKCVSLKRNDFQEACVFNEEIYCICDIPVMKVYNPVRAEWRQMNNIPLVSETNNYRIIKHGQKLLLITSRTPQWKKNRVTVYEYDIRGDQWINIGTTLGLLQFDSNFFCLSARVYPSCLEPGQSFLTEEEEIPSESSTEWDLGGFSEPDSESGSSSSLSDDDFWVRVAPQ.

The disordered stretch occupies residues 1 to 28 (MQSREDAPRSRRLASPRGGKRPKKIHKP). Residues 10 to 27 (SRRLASPRGGKRPKKIHK) show a composition bias toward basic residues. Positions 63–138 (CDVTIEVVTP…CYTGRVSLSE (76 aa)) constitute a BTB domain. Kelch repeat units follow at residues 386–435 (AVCI…YLNG), 436–484 (YIYI…VIRD), 486–523 (LYAL…VFNE), 524–564 (EIYC…IIKH), 567–616 (KLLL…CLSA), and 642–673 (TEWD…RVAP). Residues 631–674 (TEEEEIPSESSTEWDLGGFSEPDSESGSSSSLSDDDFWVRVAPQ) form a disordered region. Residues 668 to 671 (WVRV) carry the ATG8 interaction motif (AIM) motif.

Core component of a BCR3 (BTB-CUL3-RBX1) E3 ubiquitin ligase complex, also named Cul3-RING ubiquitin ligase complex CUL3(KBTBD6/7), composed of CUL3, RBX1, KBTBD6 and KBTBD7. Interacts with GABARAP; the interaction is direct and is required for the ubiquitination of TIAM1. Interacts with GABARAPL1, GABARAPL2 and MAP1LC3B; the interaction is direct.

Its subcellular location is the cytoplasm. It is found in the nucleus. Its pathway is protein modification; protein ubiquitination. As part of the CUL3(KBTBD6/7) E3 ubiquitin ligase complex functions as a substrate adapter for the RAC1 guanine exchange factor (GEF) TIAM1, mediating its 'Lys-48' ubiquitination and proteasomal degradation. By controlling this ubiquitination, regulates RAC1 signal transduction and downstream biological processes including the organization of the cytoskeleton, cell migration and cell proliferation. Ubiquitination of TIAM1 requires the membrane-associated protein GABARAP which may restrict locally the activity of the complex. This Homo sapiens (Human) protein is Kelch repeat and BTB domain-containing protein 6.